A 158-amino-acid polypeptide reads, in one-letter code: Transcription elongation factor GreA (158 aa).

The protein belongs to the GreA/GreB family.

Its function is as follows. Necessary for efficient RNA polymerase transcription elongation past template-encoded arresting sites. The arresting sites in DNA have the property of trapping a certain fraction of elongating RNA polymerases that pass through, resulting in locked ternary complexes. Cleavage of the nascent transcript by cleavage factors such as GreA or GreB allows the resumption of elongation from the new 3'terminus. GreA releases sequences of 2 to 3 nucleotides. This chain is Transcription elongation factor GreA, found in Psychrobacter cryohalolentis (strain ATCC BAA-1226 / DSM 17306 / VKM B-2378 / K5).